Reading from the N-terminus, the 151-residue chain is 3-hydroxyacyl-[acyl-carrier-protein] dehydratase FabZ (151 aa).

Histidine 56 is an active-site residue.

Belongs to the thioester dehydratase family. FabZ subfamily.

It is found in the cytoplasm. The catalysed reaction is a (3R)-hydroxyacyl-[ACP] = a (2E)-enoyl-[ACP] + H2O. Involved in unsaturated fatty acids biosynthesis. Catalyzes the dehydration of short chain beta-hydroxyacyl-ACPs and long chain saturated and unsaturated beta-hydroxyacyl-ACPs. This chain is 3-hydroxyacyl-[acyl-carrier-protein] dehydratase FabZ, found in Rhodopseudomonas palustris (strain ATCC BAA-98 / CGA009).